The sequence spans 670 residues: Zinc finger protein 233 (670 aa).

Residues 8 to 79 (VTFKDVAVVF…ETEIQGDGCS (72 aa)) enclose the KRAB domain. The C2H2-type 1; degenerate zinc finger occupies 258–280 (QTSDENGKGLSVGSNLELHQQLH). The C2H2-type 2; degenerate zinc finger occupies 311-336 (EKCYRNGDSGEGFSQGSHLQPHQRVS). The C2H2-type 3; degenerate zinc finger occupies 342-364 (YRCQVYARSSNQNSCLPSHELTH). The C2H2-type 4; degenerate zinc finger occupies 370–392 (CTCGRCGKGFHHSLDFDIHCVDS). Residues 398-420 (CKCDVYDKGFSQTSQLQAHQRGH) form a C2H2-type 5; degenerate zinc finger. 7 C2H2-type zinc fingers span residues 452–474 (YKCE…QRIH), 480–502 (YKCD…QRVH), 508–530 (YKCD…QRVH), 536–558 (YKCE…QQVH), 564–586 (YKCD…QRVH), 592–614 (YKCE…QRIH), and 620–642 (YKCG…QRVH).

The protein belongs to the krueppel C2H2-type zinc-finger protein family.

It is found in the nucleus. Its function is as follows. May be involved in transcriptional regulation. The sequence is that of Zinc finger protein 233 (ZNF233) from Homo sapiens (Human).